A 605-amino-acid polypeptide reads, in one-letter code: FAD-linked oxidoreductase easE (605 aa).

Residues 1 to 20 (MRHFVTFVVGFLLSWGFLSS) form the signal peptide. 2 N-linked (GlcNAc...) asparagine glycosylation sites follow: asparagine 46 and asparagine 105. Residues 122–307 (CHQGRLPLYS…TQATVRAFPD (186 aa)) form the FAD-binding PCMH-type domain. An N-linked (GlcNAc...) asparagine glycan is attached at asparagine 370.

Belongs to the oxygen-dependent FAD-linked oxidoreductase family. It depends on FAD as a cofactor.

The protein operates within alkaloid biosynthesis; ergot alkaloid biosynthesis. Its function is as follows. FAD-linked oxidoreductase; part of the gene cluster that mediates the biosynthesis of fungal ergot alkaloid ergovaline, the predominant ergopeptine product in E.festucae var. lolii. DmaW catalyzes the first step of ergot alkaloid biosynthesis by condensing dimethylallyl diphosphate (DMAP) and tryptophan to form 4-dimethylallyl-L-tryptophan. The second step is catalyzed by the methyltransferase easF that methylates 4-dimethylallyl-L-tryptophan in the presence of S-adenosyl-L-methionine, resulting in the formation of 4-dimethylallyl-L-abrine. The catalase easC and the FAD-dependent oxidoreductase easE then transform 4-dimethylallyl-L-abrine to chanoclavine-I which is further oxidized by easD in the presence of NAD(+), resulting in the formation of chanoclavine-I aldehyde. Agroclavine dehydrogenase easG then mediates the conversion of chanoclavine-I aldehyde to agroclavine via a non-enzymatic adduct reaction: the substrate is an iminium intermediate that is formed spontaneously from chanoclavine-I aldehyde in the presence of glutathione. The presence of easA is not required to complete this reaction. Further conversion of agroclavine to paspalic acid is a two-step process involving oxidation of agroclavine to elymoclavine and of elymoclavine to paspalic acid, the second step being performed by the elymoclavine oxidase cloA. Paspalic acid is then further converted to D-lysergic acid. Ergovaline is assembled from D-lysergic acid and three different amino acids by the D-lysergyl-peptide-synthetase composed of a monomudular (lpsB) and a trimodular (lpsA) nonribosomal peptide synthetase subunit. The chain is FAD-linked oxidoreductase easE from Epichloe festucae var. lolii (Neotyphodium lolii).